A 187-amino-acid polypeptide reads, in one-letter code: MISSNDFRTGTTIELDGAVWRVIEFLHVKPGKGSAFVRTKLKAVVSGNVVEKTFRAGEMVPQALLEKSKLQHTYMDGDDFVFMDMTSYEETRLTAKQIGESRKYLKEGMEVNVVSWNEKPLEVELPNSVVLEIKETDPGVKGDTASGGTKPAILETGAQVMVPLFISIGEKIRVDTRNDSYLGRETQ.

The protein belongs to the elongation factor P family.

The protein resides in the cytoplasm. It participates in protein biosynthesis; polypeptide chain elongation. Its function is as follows. Involved in peptide bond synthesis. Stimulates efficient translation and peptide-bond synthesis on native or reconstituted 70S ribosomes in vitro. Probably functions indirectly by altering the affinity of the ribosome for aminoacyl-tRNA, thus increasing their reactivity as acceptors for peptidyl transferase. The polypeptide is Elongation factor P (Prochlorococcus marinus (strain NATL2A)).